A 160-amino-acid polypeptide reads, in one-letter code: 3-hydroxyacyl-[acyl-carrier-protein] dehydratase FabZ (160 aa).

Histidine 63 is an active-site residue.

It belongs to the thioester dehydratase family. FabZ subfamily.

The protein localises to the cytoplasm. The enzyme catalyses a (3R)-hydroxyacyl-[ACP] = a (2E)-enoyl-[ACP] + H2O. In terms of biological role, involved in unsaturated fatty acids biosynthesis. Catalyzes the dehydration of short chain beta-hydroxyacyl-ACPs and long chain saturated and unsaturated beta-hydroxyacyl-ACPs. This chain is 3-hydroxyacyl-[acyl-carrier-protein] dehydratase FabZ, found in Xylella fastidiosa (strain M23).